A 150-amino-acid chain; its full sequence is Lipoprotein signal peptidase (150 aa).

Transmembrane regions (helical) follow at residues 59–79 (VFVG…RYLP) and 84–101 (LLRL…GNLI). Residues aspartate 111 and aspartate 125 contribute to the active site. The helical transmembrane segment at 117–137 (IWPVFNLADMAIVFGVIILCW) threads the bilayer.

It belongs to the peptidase A8 family.

The protein resides in the cell membrane. It carries out the reaction Release of signal peptides from bacterial membrane prolipoproteins. Hydrolyzes -Xaa-Yaa-Zaa-|-(S,diacylglyceryl)Cys-, in which Xaa is hydrophobic (preferably Leu), and Yaa (Ala or Ser) and Zaa (Gly or Ala) have small, neutral side chains.. It participates in protein modification; lipoprotein biosynthesis (signal peptide cleavage). Its function is as follows. This protein specifically catalyzes the removal of signal peptides from prolipoproteins. The polypeptide is Lipoprotein signal peptidase (Moorella thermoacetica (strain ATCC 39073 / JCM 9320)).